We begin with the raw amino-acid sequence, 372 residues long: Chaperone protein DnaJ (372 aa).

One can recognise a J domain in the interval 5 to 69 (EFYDRLGVSK…QKRAAYDQYG (65 aa)). A CR-type zinc finger spans residues 129–211 (GTEKEVKYHR…CHGTGHEKQA (83 aa)). Cysteine 142, cysteine 145, cysteine 159, cysteine 162, cysteine 185, cysteine 188, cysteine 199, and cysteine 202 together coordinate Zn(2+). CXXCXGXG motif repeat units follow at residues 142-149 (CRTCNGSG), 159-166 (CGRCHGAG), 185-192 (CDVCHGRG), and 199-206 (CTTCHGTG).

The protein belongs to the DnaJ family. In terms of assembly, homodimer. Zn(2+) is required as a cofactor.

The protein resides in the cytoplasm. Functionally, participates actively in the response to hyperosmotic and heat shock by preventing the aggregation of stress-denatured proteins and by disaggregating proteins, also in an autonomous, DnaK-independent fashion. Unfolded proteins bind initially to DnaJ; upon interaction with the DnaJ-bound protein, DnaK hydrolyzes its bound ATP, resulting in the formation of a stable complex. GrpE releases ADP from DnaK; ATP binding to DnaK triggers the release of the substrate protein, thus completing the reaction cycle. Several rounds of ATP-dependent interactions between DnaJ, DnaK and GrpE are required for fully efficient folding. Also involved, together with DnaK and GrpE, in the DNA replication of plasmids through activation of initiation proteins. This Streptococcus pneumoniae (strain ATCC BAA-255 / R6) protein is Chaperone protein DnaJ.